The primary structure comprises 85 residues: Small ribosomal subunit protein bS20 (85 aa).

The disordered stretch occupies residues 1–22; sequence MANIKSAIKRAKLSEERRAHNA.

The protein belongs to the bacterial ribosomal protein bS20 family.

Functionally, binds directly to 16S ribosomal RNA. The polypeptide is Small ribosomal subunit protein bS20 (Bacillus cytotoxicus (strain DSM 22905 / CIP 110041 / 391-98 / NVH 391-98)).